We begin with the raw amino-acid sequence, 96 residues long: MSWFNYFRATRGNSARTAKERLQIVIAHERIDRSGPSYLPRLRGDIIEVIRKYIEIDEDQVKIQMEQEGDMDVLALNIQLPDASPPLSETRHSSKQ.

The protein belongs to the MinE family.

Its function is as follows. Prevents the cell division inhibition by proteins MinC and MinD at internal division sites while permitting inhibition at polar sites. This ensures cell division at the proper site by restricting the formation of a division septum at the midpoint of the long axis of the cell. The chain is Cell division topological specificity factor from Nitrosococcus oceani (strain ATCC 19707 / BCRC 17464 / JCM 30415 / NCIMB 11848 / C-107).